The following is a 229-amino-acid chain: Uracil-DNA glycosylase (229 aa).

The active-site Proton acceptor is the D64.

The protein belongs to the uracil-DNA glycosylase (UDG) superfamily. UNG family.

The protein localises to the cytoplasm. The enzyme catalyses Hydrolyzes single-stranded DNA or mismatched double-stranded DNA and polynucleotides, releasing free uracil.. Excises uracil residues from the DNA which can arise as a result of misincorporation of dUMP residues by DNA polymerase or due to deamination of cytosine. The chain is Uracil-DNA glycosylase from Escherichia coli (strain 55989 / EAEC).